The chain runs to 271 residues: Indole-3-glycerol phosphate synthase (271 aa).

The protein belongs to the TrpC family.

The enzyme catalyses 1-(2-carboxyphenylamino)-1-deoxy-D-ribulose 5-phosphate + H(+) = (1S,2R)-1-C-(indol-3-yl)glycerol 3-phosphate + CO2 + H2O. It participates in amino-acid biosynthesis; L-tryptophan biosynthesis; L-tryptophan from chorismate: step 4/5. This Haloarcula marismortui (strain ATCC 43049 / DSM 3752 / JCM 8966 / VKM B-1809) (Halobacterium marismortui) protein is Indole-3-glycerol phosphate synthase.